The chain runs to 353 residues: UPF0283 membrane protein KPN78578_12740 (353 aa).

Helical transmembrane passes span 70-90 (MVSA…VQWT), 99-119 (WIAL…VGSL), and 213-233 (ESTL…FIAW).

This sequence belongs to the UPF0283 family.

The protein resides in the cell inner membrane. In Klebsiella pneumoniae subsp. pneumoniae (strain ATCC 700721 / MGH 78578), this protein is UPF0283 membrane protein KPN78578_12740.